Consider the following 75-residue polypeptide: UPF0346 protein LGAS_0911 (75 aa).

This sequence belongs to the UPF0346 family.

The polypeptide is UPF0346 protein LGAS_0911 (Lactobacillus gasseri (strain ATCC 33323 / DSM 20243 / BCRC 14619 / CIP 102991 / JCM 1131 / KCTC 3163 / NCIMB 11718 / NCTC 13722 / AM63)).